The chain runs to 392 residues: 8-amino-7-oxononanoate synthase (392 aa).

Arginine 21 lines the substrate pocket. 114-115 (GY) serves as a coordination point for pyridoxal 5'-phosphate. Histidine 139 contributes to the substrate binding site. Pyridoxal 5'-phosphate-binding positions include serine 187, 212–215 (DEAH), and 243–246 (TFGK). N6-(pyridoxal phosphate)lysine is present on lysine 246. Threonine 359 lines the substrate pocket.

Belongs to the class-II pyridoxal-phosphate-dependent aminotransferase family. BioF subfamily. Homodimer. Pyridoxal 5'-phosphate is required as a cofactor.

It carries out the reaction 6-carboxyhexanoyl-[ACP] + L-alanine + H(+) = (8S)-8-amino-7-oxononanoate + holo-[ACP] + CO2. It participates in cofactor biosynthesis; biotin biosynthesis. In terms of biological role, catalyzes the decarboxylative condensation of pimeloyl-[acyl-carrier protein] and L-alanine to produce 8-amino-7-oxononanoate (AON), [acyl-carrier protein], and carbon dioxide. In Chlorobaculum parvum (strain DSM 263 / NCIMB 8327) (Chlorobium vibrioforme subsp. thiosulfatophilum), this protein is 8-amino-7-oxononanoate synthase.